The primary structure comprises 716 residues: Probable extracellular serine carboxypeptidase (716 aa).

The N-terminal stretch at 1–17 is a signal peptide; sequence MVKLTACLLLLVAAVQA. N-linked (GlcNAc...) asparagine glycans are attached at residues asparagine 143 and asparagine 174. The active-site Charge relay system is the serine 188. N-linked (GlcNAc...) asparagine glycans are attached at residues asparagine 258 and asparagine 354. The Charge relay system role is filled by aspartate 466. Asparagine 507 and asparagine 550 each carry an N-linked (GlcNAc...) asparagine glycan. Residues 617 to 636 form a disordered region; the sequence is RDLAAQPSKSKKDRRGQQLS. The helical transmembrane segment at 652-672 threads the bilayer; the sequence is LGFVSFLVFAFSSFTFIPDIE.

This sequence belongs to the peptidase S28 family.

It localises to the membrane. It is found in the secreted. This chain is Probable extracellular serine carboxypeptidase, found in Arthroderma benhamiae (strain ATCC MYA-4681 / CBS 112371) (Trichophyton mentagrophytes).